Here is a 186-residue protein sequence, read N- to C-terminus: ADP-ribosylation factor-like protein 8A (186 aa).

Residues 1-19 (MIALFNKLLDWFKALFWKE) constitute an intramembrane region (note=Mediates targeting to membranes). GTP contacts are provided by residues 29 to 35 (QYSGKTT), 71 to 75 (DIGGQ), and 130 to 133 (NKRD).

It belongs to the small GTPase superfamily. Arf family. As to quaternary structure, interacts with PLEKHM1. When GTP-bound, interacts with RUFY3 and RUFY4, but not with RUFY1, nor RUFY2. In terms of tissue distribution, ubiquitously expressed.

It localises to the late endosome membrane. The protein resides in the lysosome membrane. Its subcellular location is the cytoplasm. The protein localises to the cytoskeleton. It is found in the spindle. It localises to the cell projection. The protein resides in the axon. Its subcellular location is the synapse. Functionally, plays a role in lysosome motility. In neurons, mediates the anterograde axonal long-range transport of presynaptic lysosome-related vesicles required for presynaptic biogenesis and synaptic function. May play a role in chromosome segregation. In Homo sapiens (Human), this protein is ADP-ribosylation factor-like protein 8A (ARL8A).